The primary structure comprises 438 residues: Enolase (438 aa).

Substrate contacts are provided by histidine 159 and glutamate 168. The active-site Proton donor is glutamate 211. Mg(2+)-binding residues include aspartate 246, glutamate 297, and aspartate 322. Residues glutamate 297 and aspartate 322 each coordinate substrate. Lysine 347 functions as the Proton acceptor in the catalytic mechanism. Substrate contacts are provided by residues 374 to 377 (SHRS) and lysine 398.

It belongs to the enolase family. In terms of assembly, homodimer. Mg(2+) is required as a cofactor.

Its subcellular location is the cytoplasm. It catalyses the reaction (2R)-2-phosphoglycerate = phosphoenolpyruvate + H2O. It participates in carbohydrate degradation; glycolysis; pyruvate from D-glyceraldehyde 3-phosphate: step 4/5. This Alternaria alternata (Alternaria rot fungus) protein is Enolase (ENO).